The following is a 559-amino-acid chain: Probable inorganic carbon transporter subunit DabB1 (559 aa).

13 helical membrane-spanning segments follow: residues 4 to 24 (LQWLIPLLPLLSALLVQLFAA), 33 to 53 (LSVALGTLTVIVAAYQLVAYI), 76 to 96 (LSSIMSLVVAGISLIVHVYSI), 106 to 126 (PRFFLLLDLMTASILLMVAAG), 173 to 193 (LVLAAVLLYQTYGAIDFPTLF), 202 to 222 (ATIMGLPTAITAAFLVALSAF), 240 to 260 (GPTPVSALMHAGIVNAGGFII), 273 to 293 (VLHMLFVVGLITALVGSVLML), 310 to 330 (MGFMVMECGLGAFSLAVFHLI), 375 to 395 (LPWLFIGLATLVVPLFILVIA), 408 to 428 (GAIVLLFFGWITGVQVLFATH), 440 to 460 (MMILLSFTLIVVGYTFIGHAF), and 487 to 507 (GLVFLLALIVVAGWFSSYLAS).

This sequence belongs to the inorganic carbon transporter (TC 9.A.2) DabB family. As to quaternary structure, forms a complex with DabA1.

It is found in the cell inner membrane. Its function is as follows. Part of an energy-coupled inorganic carbon pump. This is Probable inorganic carbon transporter subunit DabB1 from Halothiobacillus neapolitanus (strain ATCC 23641 / c2) (Thiobacillus neapolitanus).